Consider the following 234-residue polypeptide: Large ribosomal subunit protein uL1 (234 aa).

It belongs to the universal ribosomal protein uL1 family. As to quaternary structure, part of the 50S ribosomal subunit.

Binds directly to 23S rRNA. The L1 stalk is quite mobile in the ribosome, and is involved in E site tRNA release. Functionally, protein L1 is also a translational repressor protein, it controls the translation of the L11 operon by binding to its mRNA. In Klebsiella pneumoniae subsp. pneumoniae (strain ATCC 700721 / MGH 78578), this protein is Large ribosomal subunit protein uL1.